We begin with the raw amino-acid sequence, 285 residues long: Bifunctional protein FolD (285 aa).

NADP(+) is bound by residues 165–167 and Ser190; that span reads GRS.

The protein belongs to the tetrahydrofolate dehydrogenase/cyclohydrolase family. In terms of assembly, homodimer.

It catalyses the reaction (6R)-5,10-methylene-5,6,7,8-tetrahydrofolate + NADP(+) = (6R)-5,10-methenyltetrahydrofolate + NADPH. The catalysed reaction is (6R)-5,10-methenyltetrahydrofolate + H2O = (6R)-10-formyltetrahydrofolate + H(+). The protein operates within one-carbon metabolism; tetrahydrofolate interconversion. Its function is as follows. Catalyzes the oxidation of 5,10-methylenetetrahydrofolate to 5,10-methenyltetrahydrofolate and then the hydrolysis of 5,10-methenyltetrahydrofolate to 10-formyltetrahydrofolate. The polypeptide is Bifunctional protein FolD (Staphylococcus haemolyticus (strain JCSC1435)).